The primary structure comprises 144 residues: Putative pre-16S rRNA nuclease (144 aa).

It belongs to the YqgF nuclease family.

Its subcellular location is the cytoplasm. Functionally, could be a nuclease involved in processing of the 5'-end of pre-16S rRNA. The chain is Putative pre-16S rRNA nuclease from Blochmanniella pennsylvanica (strain BPEN).